The sequence spans 63 residues: Ferredoxin (63 aa).

The 28-residue stretch at 2–29 folds into the 4Fe-4S ferredoxin-type domain; sequence KVTVDQDLCIACGTCIDLCPSVFDWDDE. The [4Fe-4S] cluster site is built by Cys-10, Cys-13, Cys-16, and Cys-55.

Requires [4Fe-4S] cluster as cofactor.

Ferredoxins are iron-sulfur proteins that transfer electrons in a wide variety of metabolic reactions. This is Ferredoxin from Moorella thermoacetica (Clostridium thermoaceticum).